The primary structure comprises 132 residues: Agouti-signaling protein (132 aa).

The first 22 residues, 1–22 (MDVTRLLLATLLVFLCFFTAYS), serve as a signal peptide directing secretion. The N-linked (GlcNAc...) asparagine glycan is linked to Asn-39. Residues 60-88 (KQISRKEAEKKRSSKKEASMKKVARPRTP) are disordered. Over residues 63 to 79 (SRKEAEKKRSSKKEASM) the composition is skewed to basic and acidic residues. Disulfide bonds link Cys-93–Cys-108, Cys-100–Cys-114, Cys-107–Cys-125, Cys-111–Cys-132, and Cys-116–Cys-123. An Agouti domain is found at 93-132 (CVATRDSCKPPAPACCDPCASCQCRFFRSACSCRVLSLNC).

The protein resides in the secreted. In terms of biological role, involved in the regulation of melanogenesis. The binding of ASP to MC1R precludes alpha-MSH initiated signaling and thus blocks production of cAMP, leading to a down-regulation of eumelanogenesis (brown/black pigment) and thus increasing synthesis of pheomelanin (yellow/red pigment). The polypeptide is Agouti-signaling protein (ASIP) (Macaca cyclopis (Taiwan macaque)).